The chain runs to 114 residues: Nucleoid-associated protein SGR_3378 (114 aa).

The protein belongs to the YbaB/EbfC family. As to quaternary structure, homodimer.

It localises to the cytoplasm. Its subcellular location is the nucleoid. Binds to DNA and alters its conformation. May be involved in regulation of gene expression, nucleoid organization and DNA protection. The polypeptide is Nucleoid-associated protein SGR_3378 (Streptomyces griseus subsp. griseus (strain JCM 4626 / CBS 651.72 / NBRC 13350 / KCC S-0626 / ISP 5235)).